Here is a 457-residue protein sequence, read N- to C-terminus: Zinc finger protein ZPR1 (457 aa).

Over residues 1–13 (MSTVSDPNSSNPP) the composition is skewed to polar residues. The tract at residues 1–21 (MSTVSDPNSSNPPESAGNIRP) is disordered. 2 C4-type zinc fingers span residues 43 to 75 (CMNC…CDHC) and 261 to 293 (CPSC…CGAC). Residues 414 to 457 (VQSLSDDDSEPDDKLTVERYDRSYEDNEDLGLNDMKTEGYEEKA) form a disordered region. Composition is skewed to basic and acidic residues over residues 425 to 438 (DDKL…RSYE) and 448 to 457 (MKTEGYEEKA).

The protein belongs to the ZPR1 family.

Its function is as follows. Might mediate EGFR and FGFR signal transduction cascades required for lumen formation in tracheal cells. In Drosophila melanogaster (Fruit fly), this protein is Zinc finger protein ZPR1.